The primary structure comprises 728 residues: 1,4-alpha-glucan branching enzyme GlgB (728 aa).

Residue D405 is the Nucleophile of the active site. E458 acts as the Proton donor in catalysis.

It belongs to the glycosyl hydrolase 13 family. GlgB subfamily. As to quaternary structure, monomer.

The enzyme catalyses Transfers a segment of a (1-&gt;4)-alpha-D-glucan chain to a primary hydroxy group in a similar glucan chain.. The protein operates within glycan biosynthesis; glycogen biosynthesis. Catalyzes the formation of the alpha-1,6-glucosidic linkages in glycogen by scission of a 1,4-alpha-linked oligosaccharide from growing alpha-1,4-glucan chains and the subsequent attachment of the oligosaccharide to the alpha-1,6 position. The chain is 1,4-alpha-glucan branching enzyme GlgB from Shigella flexneri serotype 5b (strain 8401).